We begin with the raw amino-acid sequence, 342 residues long: Phospho-N-acetylmuramoyl-pentapeptide-transferase (342 aa).

10 helical membrane passes run 8–28 (VAQP…VIAP), 58–78 (GIPS…TAIF), 86–106 (IWVI…DDYL), 116–136 (ISLE…LIFL), 152–172 (GLID…VGSS), 184–204 (LATL…HLSL), 213–233 (VVGA…LSFL), 242–262 (VFMG…MSVM), 267–287 (FIYA…MAQV), and 318–338 (IVTR…AAII).

This sequence belongs to the glycosyltransferase 4 family. MraY subfamily. Mg(2+) is required as a cofactor.

The protein localises to the cell inner membrane. It catalyses the reaction UDP-N-acetyl-alpha-D-muramoyl-L-alanyl-gamma-D-glutamyl-meso-2,6-diaminopimeloyl-D-alanyl-D-alanine + di-trans,octa-cis-undecaprenyl phosphate = di-trans,octa-cis-undecaprenyl diphospho-N-acetyl-alpha-D-muramoyl-L-alanyl-D-glutamyl-meso-2,6-diaminopimeloyl-D-alanyl-D-alanine + UMP. The protein operates within cell wall biogenesis; peptidoglycan biosynthesis. Catalyzes the initial step of the lipid cycle reactions in the biosynthesis of the cell wall peptidoglycan: transfers peptidoglycan precursor phospho-MurNAc-pentapeptide from UDP-MurNAc-pentapeptide onto the lipid carrier undecaprenyl phosphate, yielding undecaprenyl-pyrophosphoryl-MurNAc-pentapeptide, known as lipid I. The polypeptide is Phospho-N-acetylmuramoyl-pentapeptide-transferase (Anaplasma marginale (strain Florida)).